The sequence spans 674 residues: Probable L-type lectin-domain containing receptor kinase I.5 (674 aa).

Residues 1–22 (MSKGLFLIWLISSFHLISFSTS) form the signal peptide. Over 23-286 (SKDTSFVFNG…RPRAEHKKVQ (264 aa)) the chain is Extracellular. The legume-lectin like stretch occupies residues 25–258 (DTSFVFNGFG…YHYLLGWSFS (234 aa)). Residues N124, N181, N185, N204, and N225 are each glycosylated (N-linked (GlcNAc...) asparagine). The chain crosses the membrane as a helical span at residues 287 to 307 (FALIIALPVILAIVVMAVLAG). Residues 308–674 (VYYHRKKKYA…DHEQPLEFKS (367 aa)) are Cytoplasmic-facing. A Protein kinase domain is found at 344–625 (FHKDRFLGRG…LPLPDFSPYT (282 aa)). ATP is bound by residues 350–358 (LGRGGFGEV) and K372. D468 serves as the catalytic Proton acceptor. Residues 649-662 (NWSAPSASSSSANN) show a composition bias toward low complexity. Positions 649–674 (NWSAPSASSSSANNSKDHEQPLEFKS) are disordered. The segment covering 663–674 (SKDHEQPLEFKS) has biased composition (basic and acidic residues).

It in the C-terminal section; belongs to the protein kinase superfamily. Ser/Thr protein kinase family. This sequence in the N-terminal section; belongs to the leguminous lectin family.

Its subcellular location is the cell membrane. The enzyme catalyses L-seryl-[protein] + ATP = O-phospho-L-seryl-[protein] + ADP + H(+). It catalyses the reaction L-threonyl-[protein] + ATP = O-phospho-L-threonyl-[protein] + ADP + H(+). The protein is Probable L-type lectin-domain containing receptor kinase I.5 (LECRK15) of Arabidopsis thaliana (Mouse-ear cress).